Here is a 287-residue protein sequence, read N- to C-terminus: Large ribosomal subunit protein uL2 (287 aa).

The interval 221–287 (RGSVMNPCDH…SKRSRGGRDS (67 aa)) is disordered. A compositionally biased stretch (basic residues) spans 258 to 287 (KTRKKNKPSNKLVVRRRRRISKRSRGGRDS).

The protein belongs to the universal ribosomal protein uL2 family. As to quaternary structure, part of the 50S ribosomal subunit. Forms a bridge to the 30S subunit in the 70S ribosome.

Functionally, one of the primary rRNA binding proteins. Required for association of the 30S and 50S subunits to form the 70S ribosome, for tRNA binding and peptide bond formation. It has been suggested to have peptidyltransferase activity; this is somewhat controversial. Makes several contacts with the 16S rRNA in the 70S ribosome. The protein is Large ribosomal subunit protein uL2 of Prochlorococcus marinus (strain MIT 9215).